Reading from the N-terminus, the 159-residue chain is Allergen Arg r 1 (159 aa).

The first 16 residues, 1–16, serve as a signal peptide directing secretion; that stretch reads MALIILLVACLSVVSA. Cystine bridges form between Cys-50–Cys-155 and Cys-109–Cys-134.

It belongs to the calycin superfamily. Histamine-binding salivary protein family. Not glycosylated.

It is found in the secreted. This chain is Allergen Arg r 1, found in Argas reflexus (European pigeon tick).